A 260-amino-acid polypeptide reads, in one-letter code: 3'-5' ssDNA/RNA exonuclease TatD (260 aa).

The a divalent metal cation site is built by Glu92, His128, and His153.

This sequence belongs to the metallo-dependent hydrolases superfamily. TatD-type hydrolase family. TatD subfamily. In terms of assembly, monomer. Mg(2+) is required as a cofactor.

Its subcellular location is the cytoplasm. 3'-5' exonuclease that prefers single-stranded DNA and RNA. May play a role in the H(2)O(2)-induced DNA damage repair. The protein is 3'-5' ssDNA/RNA exonuclease TatD of Pectobacterium carotovorum subsp. carotovorum (strain PC1).